The primary structure comprises 361 residues: Ornithine carbamoyltransferase, mitochondrial (361 aa).

The N-terminal 24 residues, 1-24 (MIPTARCGALRQKIPVQAVRQYSS), are a transit peptide targeting the mitochondrion. Carbamoyl phosphate contacts are provided by residues 89–92 (STRT), R140, H167, and Q170. Residues N207, D273, S277, and M278 each coordinate L-ornithine. C315 acts as the Proton acceptor in catalysis. Carbamoyl phosphate contacts are provided by residues 315 to 316 (CL) and R342.

It belongs to the aspartate/ornithine carbamoyltransferase superfamily. OTCase family. As to quaternary structure, homotrimer.

Its subcellular location is the mitochondrion matrix. The enzyme catalyses carbamoyl phosphate + L-ornithine = L-citrulline + phosphate + H(+). It participates in amino-acid biosynthesis; L-arginine biosynthesis; L-arginine from L-ornithine and carbamoyl phosphate: step 1/3. This is Ornithine carbamoyltransferase, mitochondrial (arg1) from Aspergillus terreus.